The following is a 560-amino-acid chain: Alpha-farnesene synthase (560 aa).

Asp308, Asp312, and Glu462 together coordinate Mg(2+). The short motif at 308 to 312 (DDIYD) is the DDXXD motif element.

It belongs to the terpene synthase family. Tpsa subfamily. Mg(2+) serves as cofactor. As to expression, expressed in the rind tissues of ripe fruits.

It is found in the cytoplasm. The enzyme catalyses (2E,6E)-farnesyl diphosphate = (3E,6E)-alpha-farnesene + diphosphate. It participates in secondary metabolite biosynthesis; terpenoid biosynthesis. In terms of biological role, sesquiterpene synthase producing exclusively alpha-farnesene. Associated with the production of sesquiterpenes responsible for the aroma of the fruit. The protein is Alpha-farnesene synthase of Cucumis melo (Muskmelon).